We begin with the raw amino-acid sequence, 710 residues long: Cyclomaltodextrin glucanotransferase (710 aa).

Positions 1–27 are cleaved as a signal peptide; sequence MKKTFKLILVLMLSLTLVFGLTAPIQA. 6 residues coordinate Ca(2+): D54, N56, N59, N60, G78, and D80. 128–129 provides a ligand contact to substrate; that stretch reads YW. Ca(2+) is bound at residue N167. H168 serves as a coordination point for substrate. A Ca(2+)-binding site is contributed by I218. Position 221 to 224 (221 to 224) interacts with substrate; that stretch reads NLFD. D227 is a Ca(2+) binding site. Residue R255 participates in substrate binding. D257 functions as the Nucleophile in the catalytic mechanism. 260–261 contacts substrate; the sequence is KH. Residue H261 coordinates Ca(2+). E285 serves as the catalytic Proton donor. Positions 355, 398, and 402 each coordinate substrate. The IPT/TIG domain maps to 526–603; that stretch reads PLIGHVGPTM…GATSNTYNNI (78 aa). Residues 605–710 enclose the CBM20 domain; sequence ILTGNQICVR…TGTVIVNWQQ (106 aa).

Belongs to the glycosyl hydrolase 13 family. The cofactor is Ca(2+).

It is found in the secreted. The enzyme catalyses Cyclizes part of a (1-&gt;4)-alpha-D-glucan chain by formation of a (1-&gt;4)-alpha-D-glucosidic bond.. Functionally, degrades starch to alpha-, beta-, and gamma-cyclodextrins, as well as linear sugars. In Thermoanaerobacterium thermosulfurigenes (Clostridium thermosulfurogenes), this protein is Cyclomaltodextrin glucanotransferase (amyA).